The primary structure comprises 338 residues: MNVYYDKDCDLSIVQGKKVAIIGYGSQGHAHALNLQDSNVDVTVGLRADSGSWKKAENAGLKVAEVEEAVKAADIIMILTPDEFQKELYNDVIEPNIKQGATLAFAHGFAIHYNQVIPRSDLDVIMVAPKAPGHTVRSEFAKGGGIPDLIAIYQDASGQAKQLALSYAAGVGGGRSGIIETTFKDETETDLFGEQAVLCGGAVELVKMGFETLTEAGYAPEMAYFECLHELKLIVDLMYEGGIADMNYSISNNAEYGEYVTGPEVINEQSREAMRNALKRIQSGEYAKMFISEGATNYPSMTARRRNNAEHQIEITGAKLRGMMPWIGGNKIIDKDKN.

The KARI N-terminal Rossmann domain maps to 1-181 (MNVYYDKDCD…GGGRSGIIET (181 aa)). Residues 24-27 (YGSQ), R47, S50, S52, and 82-85 (DEFQ) contribute to the NADP(+) site. The active site involves H107. G133 lines the NADP(+) pocket. Residues 182–327 (TFKDETETDL…AKLRGMMPWI (146 aa)) form the KARI C-terminal knotted domain. Mg(2+) is bound by residues D190, E194, E226, and E230. Residue S251 coordinates substrate.

It belongs to the ketol-acid reductoisomerase family. Mg(2+) serves as cofactor.

The enzyme catalyses (2R)-2,3-dihydroxy-3-methylbutanoate + NADP(+) = (2S)-2-acetolactate + NADPH + H(+). It catalyses the reaction (2R,3R)-2,3-dihydroxy-3-methylpentanoate + NADP(+) = (S)-2-ethyl-2-hydroxy-3-oxobutanoate + NADPH + H(+). It participates in amino-acid biosynthesis; L-isoleucine biosynthesis; L-isoleucine from 2-oxobutanoate: step 2/4. The protein operates within amino-acid biosynthesis; L-valine biosynthesis; L-valine from pyruvate: step 2/4. In terms of biological role, involved in the biosynthesis of branched-chain amino acids (BCAA). Catalyzes an alkyl-migration followed by a ketol-acid reduction of (S)-2-acetolactate (S2AL) to yield (R)-2,3-dihydroxy-isovalerate. In the isomerase reaction, S2AL is rearranged via a Mg-dependent methyl migration to produce 3-hydroxy-3-methyl-2-ketobutyrate (HMKB). In the reductase reaction, this 2-ketoacid undergoes a metal-dependent reduction by NADPH to yield (R)-2,3-dihydroxy-isovalerate. The chain is Ketol-acid reductoisomerase (NADP(+)) from Psychrobacter arcticus (strain DSM 17307 / VKM B-2377 / 273-4).